A 604-amino-acid polypeptide reads, in one-letter code: Nuclear cap-binding protein subunit 3 (604 aa).

A disordered region spans residues 1 to 36 (MAAVRGLRISVKAEATATTAEPRGPEPEPMEVEEGE). The segment at 116–177 (DTIYICGVDE…MSSFPDQEKP (62 aa)) is RNA recognition motif (RRM) domain. The WLDD motif; essential for 7-methylguanosine-containing mRNA cap binding motif lies at 145–148 (WLDD). Disordered stretches follow at residues 168-219 (MSSF…DIEL), 319-383 (KHRH…DSDE), and 457-604 (QNNN…DTES). Basic and acidic residues predominate over residues 173-198 (DQEKPKGGENNEEKTAEKNKKEKQEE). Acidic residues-rich tracts occupy residues 199–219 (STDDETEEGEVEDENPSDIEL) and 331–349 (EPIEEEEEEEEVQDMDEDD). Residues 350–370 (RVVVEYRDDLQPFKQSRDRGA) are compositionally biased toward basic and acidic residues. Residues 458–469 (NNNGLRQPNSIV) are compositionally biased toward polar residues. 3 stretches are compositionally biased toward basic and acidic residues: residues 495–505 (PRREPISDVHS), 539–548 (TQEKTSDKPE), and 569–582 (IKEKGESRQKKSRL). Over residues 595–604 (ESSSGSDTES) the composition is skewed to low complexity.

This sequence belongs to the NCBP3 family. Component of an alternative cap-binding complex (CBC) composed of NCBP1/CBP80 and NCBP3.

The protein resides in the nucleus. Its subcellular location is the cytoplasm. Associates with NCBP1/CBP80 to form an alternative cap-binding complex (CBC) which plays a key role in mRNA export. NCBP3 serves as adapter protein linking the capped RNAs (m7GpppG-capped RNA) to NCBP1/CBP80. Unlike the conventional CBC with NCBP2 which binds both small nuclear RNA (snRNA) and messenger (mRNA) and is involved in their export from the nucleus, the alternative CBC with NCBP3 does not bind snRNA and associates only with mRNA thereby playing a role in only mRNA export. The polypeptide is Nuclear cap-binding protein subunit 3 (Gallus gallus (Chicken)).